We begin with the raw amino-acid sequence, 141 residues long: Cystatin (141 aa).

An N-terminal signal peptide occupies residues 1–26 (MVHSQLPVAAPLRLLCALLLLPSATM). The 101-residue stretch at 29–129 (GGISPRSVTD…CHFQVWSRPW (101 aa)) folds into the Cystatin domain. A Secondary area of contact motif is present at residues 73-77 (QVVAG). 2 disulfide bridges follow: Cys-91–Cys-107 and Cys-120–Cys-140.

The protein belongs to the cystatin family. As to expression, expressed by the venom gland at an extremely low level (at protein level).

The protein resides in the secreted. Functionally, inhibits various C1 cysteine proteases including cathepsin L, papain and cathepsin B. This protein has no toxic activity and its function in the venom is unknown. It may play a role as a housekeeping or regulatory protein. The polypeptide is Cystatin (Oxyuranus microlepidotus (Inland taipan)).